The chain runs to 142 residues: Photosystem II extrinsic protein U (142 aa).

Positions methionine 1–alanine 28 are cleaved as a signal peptide.

Belongs to the PsbU family. As to quaternary structure, PSII is composed of 1 copy each of membrane proteins PsbA, PsbB, PsbC, PsbD, PsbE, PsbF, PsbH, PsbI, PsbJ, PsbK, PsbL, PsbM, PsbT, PsbX, PsbY, PsbZ, Psb30/Ycf12, peripheral proteins PsbO, CyanoQ (PsbQ), PsbU, PsbV and a large number of cofactors. It forms dimeric complexes.

Its subcellular location is the cellular thylakoid membrane. Functionally, one of the extrinsic, lumenal subunits of photosystem II (PSII). PSII is a light-driven water plastoquinone oxidoreductase, using light energy to abstract electrons from H(2)O, generating a proton gradient subsequently used for ATP formation. The extrinsic proteins stabilize the structure of photosystem II oxygen-evolving complex (OEC), the ion environment of oxygen evolution and protect the OEC against heat-induced inactivation. The polypeptide is Photosystem II extrinsic protein U (Trichodesmium erythraeum (strain IMS101)).